Reading from the N-terminus, the 318-residue chain is Methionyl-tRNA formyltransferase (318 aa).

Position 112-115 (112-115 (SILP)) interacts with (6S)-5,6,7,8-tetrahydrofolate.

It belongs to the Fmt family.

The catalysed reaction is L-methionyl-tRNA(fMet) + (6R)-10-formyltetrahydrofolate = N-formyl-L-methionyl-tRNA(fMet) + (6S)-5,6,7,8-tetrahydrofolate + H(+). Functionally, attaches a formyl group to the free amino group of methionyl-tRNA(fMet). The formyl group appears to play a dual role in the initiator identity of N-formylmethionyl-tRNA by promoting its recognition by IF2 and preventing the misappropriation of this tRNA by the elongation apparatus. This is Methionyl-tRNA formyltransferase from Haemophilus influenzae (strain PittEE).